The primary structure comprises 368 residues: ATP-dependent (S)-NAD(P)H-hydrate dehydratase (368 aa).

One can recognise a YjeF C-terminal domain in the interval 3–359; sequence SPSKKLLANV…DEVHGSFLDL (357 aa). (6S)-NADPHX is bound by residues Gly-120 and 173–179; that span reads NVVEFAR. ATP contacts are provided by residues 217–221 and 236–245; these read KGPHD and GGLKRSGGQG. Asp-246 provides a ligand contact to (6S)-NADPHX.

It belongs to the NnrD/CARKD family. Mg(2+) serves as cofactor.

It is found in the cytoplasm. It catalyses the reaction (6S)-NADHX + ATP = ADP + phosphate + NADH + H(+). The enzyme catalyses (6S)-NADPHX + ATP = ADP + phosphate + NADPH + H(+). Functionally, catalyzes the dehydration of the S-form of NAD(P)HX at the expense of ATP, which is converted to ADP. Together with NAD(P)HX epimerase, which catalyzes the epimerization of the S- and R-forms, the enzyme allows the repair of both epimers of NAD(P)HX, a damaged form of NAD(P)H that is a result of enzymatic or heat-dependent hydration. In Ajellomyces capsulatus (strain G186AR / H82 / ATCC MYA-2454 / RMSCC 2432) (Darling's disease fungus), this protein is ATP-dependent (S)-NAD(P)H-hydrate dehydratase.